The sequence spans 448 residues: Divalent metal cation transporter MntH (448 aa).

Positions 1-10 are enriched in basic and acidic residues; the sequence is MKKDKTERTK. Residues 1 to 20 form a disordered region; sequence MKKDKTERTKQSWRKAQNAP. 11 helical membrane-spanning segments follow: residues 41-61, 69-89, 117-137, 147-167, 176-196, 215-235, 270-290, 307-327, 363-383, 384-404, and 424-444; these read LFAF…PGNW, SEFG…AVLL, GFVL…AEVI, FGIP…LVLF, IEVI…AEMV, IVTN…TVMP, FSLT…AAAF, LLNP…ALLA, VLAI…GINE, LLIF…IPLV, and IISW…LFYT.

It belongs to the NRAMP family.

It localises to the cell membrane. Its function is as follows. H(+)-stimulated, divalent metal cation uptake system. The chain is Divalent metal cation transporter MntH from Listeria monocytogenes serotype 4b (strain CLIP80459).